The sequence spans 432 residues: EF-hand calcium-binding domain-containing protein 3 (432 aa).

2 EF-hand domains span residues 45–80 (AQLEAFRNAYNFFTKDRTGCIDSHGLMSTVAKLGMN) and 81–116 (LNAYDIYNELKCADRDRDGKINFSDFIDVLTDKKLF). Ca(2+)-binding residues include aspartate 94, aspartate 96, aspartate 98, lysine 100, and aspartate 105. Tyrosine 273 is modified (phosphotyrosine). The disordered stretch occupies residues 394–432 (NVNKTSPSNSGLSSPSDLSESDPETGRKRKRKSSRGFRQ). Residues 399-411 (SPSNSGLSSPSDL) are compositionally biased toward low complexity. Basic residues predominate over residues 420–432 (RKRKRKSSRGFRQ).

The sequence is that of EF-hand calcium-binding domain-containing protein 3 (Efcab3) from Rattus norvegicus (Rat).